Reading from the N-terminus, the 698-residue chain is PWWP domain-containing DNA repair factor 3A (698 aa).

Disordered regions lie at residues 102 to 145 (TSLS…EDDQ) and 159 to 386 (CSPK…EEPP). Position 105 is a phosphoserine (serine 105). The span at 129–139 (SQVSSAPSPSF) shows a compositional bias: polar residues. Residues serine 165, serine 168, and serine 170 each carry the phosphoserine modification. A compositionally biased stretch (polar residues) spans 200 to 211 (DESQNGSGSQLD). Basic and acidic residues-rich tracts occupy residues 212–235 (HGQE…RGKA) and 341–350 (RAGDSDRPEE). 2 positions are modified to phosphoserine: serine 355 and serine 356. Over residues 370-384 (EEEEEEEEEEEEEEE) the composition is skewed to acidic residues. In terms of domain architecture, PWWP spans 399-460 (VGMLVWLKYQ…KHFDCKEKHA (62 aa)).

The protein belongs to the PWWP3A family. Interacts with TP53BP1 (via BRCT domain); the interaction is not dependent on its phosphorylation status. Binds nucleosomes. Interacts with trimethylated 'Lys-36' of histone H3 (H3K36me3) (in vitro).

The protein localises to the nucleus. In terms of biological role, involved in the DNA damage response pathway by contributing to the maintenance of chromatin architecture. Recruited to the vicinity of DNA breaks by TP53BP1 and plays an accessory role to facilitate damage-induced chromatin changes and promoting chromatin relaxation. Required for efficient DNA repair and cell survival following DNA damage. In Rattus norvegicus (Rat), this protein is PWWP domain-containing DNA repair factor 3A.